A 55-amino-acid chain; its full sequence is Hydrophobic protein LTI6B (55 aa).

2 helical membrane-spanning segments follow: residues 8–28 and 31–51; these read IDIL…FGCG and FWIC…YAIY.

It belongs to the UPF0057 (PMP3) family.

The protein localises to the membrane. In terms of biological role, plays a role in the regulation of membrane potential. Could mediate a proton leak. The sequence is that of Hydrophobic protein LTI6B (LTI6B) from Oryza sativa subsp. indica (Rice).